The chain runs to 126 residues: Protein ApaG (126 aa).

The 125-residue stretch at 2 to 126 (SALDDSIRVE…FRLALPGLLH (125 aa)) folds into the ApaG domain.

This Shewanella sp. (strain MR-4) protein is Protein ApaG.